We begin with the raw amino-acid sequence, 409 residues long: Peptidase T (409 aa).

H78 serves as a coordination point for Zn(2+). Residue D80 is part of the active site. D140 contributes to the Zn(2+) binding site. E173 (proton acceptor) is an active-site residue. Zn(2+) contacts are provided by E174, D196, and H379.

Belongs to the peptidase M20B family. Zn(2+) is required as a cofactor.

Its subcellular location is the cytoplasm. It carries out the reaction Release of the N-terminal residue from a tripeptide.. Its function is as follows. Cleaves the N-terminal amino acid of tripeptides. This is Peptidase T from Salmonella paratyphi C (strain RKS4594).